A 111-amino-acid chain; its full sequence is Translation initiation factor 1A 1 (111 aa).

The disordered stretch occupies residues 1 to 28 (MTLADLKKPTSRASPSTEETVTRVRTPR). Residues 22–96 (TRVRTPRREN…EKADVIWKYT (75 aa)) form the S1-like domain.

The protein belongs to the eIF-1A family.

In terms of biological role, seems to be required for maximal rate of protein biosynthesis. Enhances ribosome dissociation into subunits and stabilizes the binding of the initiator Met-tRNA(I) to 40 S ribosomal subunits. This Methanosarcina mazei (strain ATCC BAA-159 / DSM 3647 / Goe1 / Go1 / JCM 11833 / OCM 88) (Methanosarcina frisia) protein is Translation initiation factor 1A 1 (eIF1A1).